Reading from the N-terminus, the 153-residue chain is Ribonuclease H (153 aa).

The region spanning 1–141 (MKKIQLFTDG…CDDLARRAAE (141 aa)) is the RNase H type-1 domain. Asp-9, Glu-47, Asp-69, and Asp-133 together coordinate Mg(2+).

Belongs to the RNase H family. As to quaternary structure, monomer. Mg(2+) is required as a cofactor.

Its subcellular location is the cytoplasm. It catalyses the reaction Endonucleolytic cleavage to 5'-phosphomonoester.. In terms of biological role, endonuclease that specifically degrades the RNA of RNA-DNA hybrids. The sequence is that of Ribonuclease H from Psychromonas ingrahamii (strain DSM 17664 / CCUG 51855 / 37).